Consider the following 1233-residue polypeptide: Insulin receptor substrate 1 (1233 aa).

S3 is modified (phosphoserine). The mediates interaction with PHIP stretch occupies residues S3–S133. Residues D12–N115 form the PH domain. Phosphoserine; by CK2 is present on S99. The 105-residue stretch at F155–F259 folds into the IRS-type PTB domain. Residues D257–E425 form a disordered region. Residues K264 to S276 show a composition bias toward low complexity. S265 and S302 each carry phosphoserine; by RPS6KB1. Position 307 is a phosphoserine; by IKKB, MAPK8 and RPS6KB1 (S307). A phosphoserine mark is found at S318, S325, S340, and S343. A compositionally biased stretch (basic residues) spans T349–S358. Low complexity-rich tracts occupy residues S378–S399 and S407–G419. S414 bears the Phosphoserine mark. Residues T441 and T448 each carry the phosphothreonine modification. Y460 is subject to Phosphotyrosine; by INSR. Positions Y460–M463 match the YXXM motif 1 motif. S522 carries the phosphoserine; by RPS6KB1 modification. 2 consecutive short sequence motifs (YXXM motif) follow at residues Y546–M549 and Y608–M611. Y608 bears the Phosphotyrosine; by INSR mark. Phosphoserine is present on S612. Residue Y628 is modified to Phosphotyrosine; by INSR. A YXXM motif 4 motif is present at residues Y628–M631. At S632 the chain carries Phosphoserine; by RPS6KB1 and ROCK2. The disordered stretch occupies residues Q651 to L720. Position 658 is a phosphotyrosine (Y658). The YXXM motif 5 motif lies at Y658–M661. Residues S662–S689 show a composition bias toward low complexity. The YXXM motif 6 signature appears at Y727–M730. The interval F766–T985 is disordered. The segment covering R771–R780 has biased composition (basic and acidic residues). 2 stretches are compositionally biased toward low complexity: residues R785–R794 and D801–S810. A Phosphoserine; by AMPK and SIK2 modification is found at S789. S887 carries the post-translational modification Phosphoserine. Y891, Y935, and Y983 each carry phosphotyrosine; by INSR. Residues Y891–N893 are GRB2-binding. 3 consecutive short sequence motifs (YXXM motif) follow at residues Y935–M938, Y983–M986, and Y1006–M1009. A disordered region spans residues A1015 to S1137. The segment covering S1032–P1042 has biased composition (low complexity). Composition is skewed to polar residues over residues Q1043 to H1052 and T1069 to A1081. S1096 and S1097 each carry phosphoserine. The span at A1116 to S1129 shows a compositional bias: gly residues. Position 1173 is a phosphotyrosine; by INSR (Y1173). Positions L1178–Q1233 are disordered. K1180 is covalently cross-linked (Glycyl lysine isopeptide (Lys-Gly) (interchain with G-Cter in ubiquitin)). Polar residues predominate over residues G1203–K1227. Residue Y1220 is modified to Phosphotyrosine; by INSR.

Interacts (via phosphorylated YXXM motifs) with PIK3R1. Interacts with ROCK1. Interacts with GRB2. Interacts with SOCS7. Interacts (via IRS-type PTB domain) with IGF1R and INSR (via the tyrosine-phosphorylated NPXY motif). Interacts with UBTF and PIK3CA. Interacts (via PH domain) with PHIP. Interacts with FER. Interacts with ALK. Interacts with EIF2AK2/PKR. Interacts with GKAP1. Interacts with DGKZ in the absence of insulin; insulin stimulation decreases this interaction. Found in a ternary complex with DGKZ and PIP5K1A in the absence of insulin stimulation. Interacts with SQSTM1; the interaction is disrupted by the presence of tensin TNS2. Interacts with NCK1 (via SH2 domain). Interacts with NCK2 (via SH3 domain). Interacts with SH2B1; this interaction enhances leptin-induced activation of the PI3-kinase pathway. Interacts with DVL2; this interaction promotes the Wnt/beta-catenin signaling pathway. In terms of processing, serine phosphorylation of IRS1 is a mechanism for insulin resistance. Ser-307 phosphorylation inhibits insulin action through disruption of IRS1 interaction with the insulin receptor. Phosphorylation of Tyr-891 is required for GRB2-binding. Phosphorylated by ALK. Phosphorylated at Ser-265, Ser-302, Ser-632 and Ser-1097 by RPS6KB1; phosphorylation induces accelerated degradation of IRS1. Phosphorylated on tyrosine residues in response to insulin. In skeletal muscles, dephosphorylated on Tyr-608 by TNS2 under anabolic conditions; dephosphorylation results in the proteasomal degradation of IRS1. Post-translationally, ubiquitinated by the Cul7-RING(FBXW8) complex in a mTOR-dependent manner, leading to its degradation: the Cul7-RING(FBXW8) complex recognizes and binds IRS1 previously phosphorylated by S6 kinase (RPS6KB1 or RPS6KB2). Ubiquitinated by TRAF4 through 'Lys-29' linkage; this ubiquitination regulates the interaction of IRS1 with IGFR and IRS1 tyrosine phosphorylation upon IGF1 stimulation. S-nitrosylation at by BLVRB inhibits its activity. Expressed in osteoblasts, but not in osteoclasts.

It localises to the cytoplasm. Its subcellular location is the nucleus. Signaling adapter protein that participates in the signal transduction from two prominent receptor tyrosine kinases, insulin receptor/INSR and insulin-like growth factor I receptor/IGF1R. Plays therefore an important role in development, growth, glucose homeostasis as well as lipid metabolism. Upon phosphorylation by the insulin receptor, functions as a signaling scaffold that propagates insulin action through binding to SH2 domain-containing proteins including the p85 regulatory subunit of PI3K, NCK1, NCK2, GRB2 or SHP2. Recruitment of GRB2 leads to the activation of the guanine nucleotide exchange factor SOS1 which in turn triggers the Ras/Raf/MEK/MAPK signaling cascade. Activation of the PI3K/AKT pathway is responsible for most of insulin metabolic effects in the cell, and the Ras/Raf/MEK/MAPK is involved in the regulation of gene expression and in cooperation with the PI3K pathway regulates cell growth and differentiation. Acts a positive regulator of the Wnt/beta-catenin signaling pathway through suppression of DVL2 autophagy-mediated degradation leading to cell proliferation. This Mus musculus (Mouse) protein is Insulin receptor substrate 1 (Irs1).